The chain runs to 404 residues: Propionate kinase PduW (404 aa).

The protein belongs to the acetokinase family. PduW subfamily.

The protein resides in the cytoplasm. It carries out the reaction propanoate + ATP = propanoyl phosphate + ADP. The protein operates within polyol metabolism; 1,2-propanediol degradation. It participates in organic acid metabolism; propanoate degradation. Its function is as follows. Works with phosphate acetyltransferase (pta) to capture exogenous propionate and regenerate propionyl-CoA during degradation of propionate and 1,2-propanediol (1,2-PD). Ectopic expression partially complements a cobB deletion allowing some growth on propionate. Restores growth to an eutQ deletion on ethanolamine and tetrathionate under anoxic conditions. In Salmonella typhimurium (strain LT2 / SGSC1412 / ATCC 700720), this protein is Propionate kinase PduW.